The chain runs to 150 residues: Endoribonuclease YbeY (150 aa).

Residues His-112, His-116, and His-122 each contribute to the Zn(2+) site.

The protein belongs to the endoribonuclease YbeY family. Zn(2+) serves as cofactor.

Its subcellular location is the cytoplasm. Single strand-specific metallo-endoribonuclease involved in late-stage 70S ribosome quality control and in maturation of the 3' terminus of the 16S rRNA. The sequence is that of Endoribonuclease YbeY from Bdellovibrio bacteriovorus (strain ATCC 15356 / DSM 50701 / NCIMB 9529 / HD100).